A 429-amino-acid chain; its full sequence is 3-phosphoshikimate 1-carboxyvinyltransferase (429 aa).

3 residues coordinate 3-phosphoshikimate: Lys20, Ser21, and Arg25. Lys20 is a binding site for phosphoenolpyruvate. Gly89 and Arg118 together coordinate phosphoenolpyruvate. Residues Ser164, Ser165, Gln166, Ser192, Asp311, and Lys338 each contribute to the 3-phosphoshikimate site. Gln166 is a binding site for phosphoenolpyruvate. The active-site Proton acceptor is the Asp311. Phosphoenolpyruvate contacts are provided by Arg342 and Arg384.

It belongs to the EPSP synthase family. As to quaternary structure, monomer.

Its subcellular location is the cytoplasm. The catalysed reaction is 3-phosphoshikimate + phosphoenolpyruvate = 5-O-(1-carboxyvinyl)-3-phosphoshikimate + phosphate. The protein operates within metabolic intermediate biosynthesis; chorismate biosynthesis. Its function is as follows. Catalyzes the transfer of the enolpyruvyl moiety of phosphoenolpyruvate (PEP) to the 5-hydroxyl of shikimate-3-phosphate (S3P) to produce enolpyruvyl shikimate-3-phosphate and inorganic phosphate. The protein is 3-phosphoshikimate 1-carboxyvinyltransferase of Methanococcus maripaludis (strain C5 / ATCC BAA-1333).